The following is a 336-amino-acid chain: Serpentine receptor class delta-51 (336 aa).

A run of 7 helical transmembrane segments spans residues 14–34, 48–68, 93–113, 133–153, 188–208, 237–257, and 275–295; these read VYYSLNVTLALSINILLLFIM, YLFNTALFEIIVSLSTYFAQC, CFVTFAVVQCSVVAASFSILL, ATTFIIFSFFPTVMLLFQLLT, AAIIAQSLISLGVYMSPLIAF, GLLIQTLIPFCVYIPPYSYFL, and IFGSFTAFINPLLTFYFVLPY.

Belongs to the nematode receptor-like protein srd family.

The protein resides in the membrane. This is Serpentine receptor class delta-51 (srd-51) from Caenorhabditis elegans.